A 222-amino-acid chain; its full sequence is Uridine diphosphate glucose pyrophosphatase NUDT14 (222 aa).

Residues 38–206 (KTHDSVTILM…DVPKTLGVIF (169 aa)) form the Nudix hydrolase domain. Positions 111–129 (PGLSLEEVACKEAWEECGY) match the Nudix box motif.

Belongs to the Nudix hydrolase family. As to quaternary structure, homodimer. Mg(2+) serves as cofactor.

It localises to the cytoplasm. The catalysed reaction is UDP-sugar + H2O = UMP + alpha-D-aldose 1-phosphate.. In terms of biological role, hydrolyzes UDP-glucose to glucose 1-phosphate and UMP and ADP-ribose to ribose 5-phosphate and AMP. The physiological substrate is probably UDP-glucose. Poor activity on other substrates such as ADP-glucose, CDP-glucose, GDP-glucose and GDP-mannose. The chain is Uridine diphosphate glucose pyrophosphatase NUDT14 (NUDT14) from Bos taurus (Bovine).